The following is a 510-amino-acid chain: Ninja-family protein mc410 (510 aa).

Disordered stretches follow at residues 1-179, 323-414, and 481-510; these read MDEN…RQIL, HPSH…PSEF, and RHASVEQTSQEPGTGVSSFPSSNPAASAQS. 2 stretches are compositionally biased toward basic and acidic residues: residues 31–44 and 103–146; these read SKVEEVDRDGKVIN and RPVE…DKTR. A compositionally biased stretch (polar residues) spans 148-160; that stretch reads SHISITTDEGSTA. 2 stretches are compositionally biased toward basic and acidic residues: residues 363 to 389 and 397 to 406; these read RAMEHVKGNGRQHKAEETSNSRGEENV and RAKDPPDQPR. The segment covering 485-496 has biased composition (polar residues); it reads VEQTSQEPGTGV. Residues 497-510 show a composition bias toward low complexity; the sequence is SSFPSSNPAASAQS.

The protein belongs to the Ninja family.

Its subcellular location is the nucleus. The polypeptide is Ninja-family protein mc410 (MC410) (Nicotiana tabacum (Common tobacco)).